A 562-amino-acid polypeptide reads, in one-letter code: F-box and WD repeat domain-containing 11-A (562 aa).

A homodimerization domain D region spans residues 87–136; sequence GSFDKEKDLCIQLFDQWSESDQVEFVEHLIARMCHYQHGHINSYLKPMLQ. The region spanning 149-187 is the F-box domain; sequence DHIAENILSFLDARSLCSAELVCREWQRVISDGMLWKKL. WD repeat units follow at residues 256 to 295, 296 to 335, 336 to 375, 379 to 418, 419 to 458, 459 to 491, and 508 to 538; these read RSEN…CLKV, LTGH…VLNT, LIHH…DISL, LVGH…FVRT, LNGH…CLRV, LEGH…WDLQ, and LVEH…LIWD.

Self-associates. Component of the SCF(FBXW11) complex.

The protein localises to the cytoplasm. It localises to the nucleus. Its pathway is protein modification; protein ubiquitination. Substrate recognition component of a SCF (SKP1-CUL1-F-box protein) E3 ubiquitin-protein ligase complex which mediates the ubiquitination and subsequent proteasomal degradation of target proteins. Probably recognizes and binds to phosphorylated target proteins: the interaction with substrates requires the phosphorylation of the two serine residues in the substrates' destruction motif D-S-G-X(2,3,4)-S. SCF(FBXW11) mediates the ubiquitination of phosphorylated CTNNB1 and participates in Wnt signaling regulation. Participates in Wnt signaling regulation, and plays a role in eye and jaw development. SCF(FBXW11) plays a key role in NF-kappa-B activation by mediating ubiquitination of phosphorylated NFKBIA, leading to its degradation by the proteasome, thereby allowing the associated NF-kappa-B complex to translocate into the nucleus and to activate transcription. The protein is F-box and WD repeat domain-containing 11-A of Danio rerio (Zebrafish).